A 444-amino-acid chain; its full sequence is Serine--tRNA ligase (444 aa).

248–250 (TSE) is an L-serine binding site. ATP is bound at residue 279 to 281 (RSE). Position 302 (Glu-302) interacts with L-serine. Position 366–369 (366–369 (EISS)) interacts with ATP. Ser-401 lines the L-serine pocket.

This sequence belongs to the class-II aminoacyl-tRNA synthetase family. Type-1 seryl-tRNA synthetase subfamily. Homodimer. The tRNA molecule binds across the dimer.

Its subcellular location is the cytoplasm. The enzyme catalyses tRNA(Ser) + L-serine + ATP = L-seryl-tRNA(Ser) + AMP + diphosphate + H(+). It carries out the reaction tRNA(Sec) + L-serine + ATP = L-seryl-tRNA(Sec) + AMP + diphosphate + H(+). Its pathway is aminoacyl-tRNA biosynthesis; selenocysteinyl-tRNA(Sec) biosynthesis; L-seryl-tRNA(Sec) from L-serine and tRNA(Sec): step 1/1. Its function is as follows. Catalyzes the attachment of serine to tRNA(Ser). Is also able to aminoacylate tRNA(Sec) with serine, to form the misacylated tRNA L-seryl-tRNA(Sec), which will be further converted into selenocysteinyl-tRNA(Sec). The protein is Serine--tRNA ligase of Polaromonas naphthalenivorans (strain CJ2).